The following is a 317-amino-acid chain: tRNA pseudouridine synthase B (317 aa).

The Nucleophile role is filled by D47.

Belongs to the pseudouridine synthase TruB family. Type 1 subfamily.

The catalysed reaction is uridine(55) in tRNA = pseudouridine(55) in tRNA. Its function is as follows. Responsible for synthesis of pseudouridine from uracil-55 in the psi GC loop of transfer RNAs. In Shewanella denitrificans (strain OS217 / ATCC BAA-1090 / DSM 15013), this protein is tRNA pseudouridine synthase B.